Reading from the N-terminus, the 236-residue chain is Probable ascorbate-specific transmembrane electron transporter 2 (236 aa).

Topologically, residues 1 to 11 (MAAGLGVKAAP) are cytoplasmic. Residues 12-32 (FTYVAHALAVAAAVMVLVWCI) traverse the membrane as a helical segment. One can recognise a Cytochrome b561 domain in the interval 15 to 219 (VAHALAVAAA…FGAAVVVAAV (205 aa)). The Extracellular portion of the chain corresponds to 33–53 (SFRGGLAFEADNKNLIFNVHP). Histidine 52 provides a ligand contact to heme b. Residues 54 to 74 (VLMLIGYIILGSEAIMIYKIF) form a helical membrane-spanning segment. 67–75 (AIMIYKIFP) serves as a coordination point for L-ascorbate. Over 75 to 84 (PKLNHDTTKL) the chain is Cytoplasmic. Residues 85 to 105 (IHLILHAIAIVLGAVGIYCAF) form a helical membrane-spanning segment. Heme b-binding residues include histidine 86 and histidine 120. Over 106–122 (KFHNESGIANLYSLHSW) the chain is Extracellular. Residue 116 to 125 (LYSLHSWLGI) coordinates monodehydro-L-ascorbate radical. The chain crosses the membrane as a helical span at residues 123–143 (LGIGTISLYGIQWIFGFVAFF). At 144–153 (YPGAAPHVRR) the chain is on the cytoplasmic side. Residues 154-174 (GALPWHVLFGLFVYVLTLATA) form a helical membrane-spanning segment. Residue histidine 159 participates in heme b binding. At 175-196 (ELGLLEKLTFLQSSGLDKYGAE) the chain is on the extracellular side. Residues 197 to 217 (AFLVNFTGLVVALFGAAVVVA) form a helical membrane-spanning segment. Over 218–236 (AVAPAHVEEPEGYAPIPVN) the chain is Cytoplasmic.

It depends on heme b as a cofactor.

Its subcellular location is the membrane. Its function is as follows. Two-heme-containing cytochrome. Catalyzes ascorbate-dependent trans-membrane electron transfer by utilizing a concerted H(+)/e(-) transfer mechanism. The polypeptide is Probable ascorbate-specific transmembrane electron transporter 2 (Oryza sativa subsp. japonica (Rice)).